The chain runs to 1439 residues: Myomesin-3 (1439 aa).

The disordered stretch occupies residues 1 to 57 (MTLPHSPGSAGEPQASQTVQVHRLEHRQEEEQKEERQHSLQMGSSVQRRTYRSSEEE). The span at 22–38 (HRLEHRQEEEQKEERQH) shows a compositional bias: basic and acidic residues. Residues 39–48 (SLQMGSSVQR) show a composition bias toward polar residues. Residues 119–149 (QRLLRQRRDWKALRQRTEEKVREAKELIELC) are a coiled coil. 2 consecutive Ig-like C2-type domains span residues 154–246 (PWFW…AKVL) and 269–362 (PSAE…AYVF). 5 Fibronectin type-III domains span residues 376–471 (SPLN…TGDY), 504–599 (APTN…LKGK), 605–698 (PPAQ…VKQA), 704–799 (APYD…CKEW), and 806–901 (PPYD…LEDK). 2 Ig-like C2-type domains span residues 1122-1207 (PYFQ…LDLT) and 1336-1425 (AKVV…VTIS).

In terms of assembly, homodimer. Mainly expressed in slow muscle, extraocular muscle and embryonic/neonatal skeletal muscle (at protein level). Expression in skeletal muscle is fiber type specific, with the highest levels in type IIA fibers (intermediate speed) and lower levels in type I fibers.

The protein resides in the cytoplasm. The protein localises to the myofibril. Its subcellular location is the sarcomere. It is found in the m line. In terms of biological role, may link the intermediate filament cytoskeleton to the M-disk of the myofibrils in striated muscle. The polypeptide is Myomesin-3 (Myom3) (Mus musculus (Mouse)).